We begin with the raw amino-acid sequence, 415 residues long: Mitogen-activated protein kinase MPS1 (415 aa).

The Protein kinase domain maps to 23-314; the sequence is YTVTKELGQG…VEQALEHPYL (292 aa). Residues 29–37 and Lys52 each bind ATP; that span reads LGQGAYGIV. The tract at residues 363–394 is disordered; that stretch reads GAGGHGAPHAPQVPIPAGAGQGQWKAEDPRPQ.

The protein belongs to the protein kinase superfamily. Ser/Thr protein kinase family. MAP kinase subfamily. As to quaternary structure, interacts with transcription factor MIG1. Interacts with transcription factor SWI6. Mg(2+) serves as cofactor.

The catalysed reaction is L-seryl-[protein] + ATP = O-phospho-L-seryl-[protein] + ADP + H(+). It carries out the reaction L-threonyl-[protein] + ATP = O-phospho-L-threonyl-[protein] + ADP + H(+). Its function is as follows. Mitogen-activated protein kinase; part of the MCK1-MKK2-MPS1 MAP kinase (MAPK) signal transduction cascade that is essential for cell wall integrity and plant infection, but not for plant defense responses. Beside its role in pathogenesis, the MPS1 cascade is active in conidiation and cellular stress responses. Targets downstream of the MPS1-MAPK pathway include transcription factors MIG1 and SWI6, as well as GSK1 and MPG1. The polypeptide is Mitogen-activated protein kinase MPS1 (Pyricularia oryzae (strain 70-15 / ATCC MYA-4617 / FGSC 8958) (Rice blast fungus)).